Reading from the N-terminus, the 693-residue chain is Alpha-glucosidase (693 aa).

Catalysis depends on residues Asp320 and Glu323. Residue Asp416 is the Proton donor of the active site.

Belongs to the glycosyl hydrolase 31 family.

It localises to the cytoplasm. It carries out the reaction Hydrolysis of terminal, non-reducing (1-&gt;4)-linked alpha-D-glucose residues with release of alpha-D-glucose.. In terms of biological role, major soluble alpha-glucosidase. The chain is Alpha-glucosidase (malA) from Saccharolobus solfataricus (strain ATCC 35092 / DSM 1617 / JCM 11322 / P2) (Sulfolobus solfataricus).